The sequence spans 146 residues: MSINIDIKKITDLLNSSILFPDDVQELLREKYIVLERKSNGTPTVAHIYKTMARFDNKSIYRIAKFLFMNRPDVIKLLFLKDVEPLLPDKSINISINNTEYPQLEGPIGTKIALLELFNAFRTGRSEPIPYYYLPLRKDINNIVTK.

The protein belongs to the orthopoxvirus OPG114 family. In terms of assembly, part of a complex composed of the kinase OPG054, OPG092, OPG100, OPG114, OPG115, OPG142 and OPG157.

The protein resides in the virion. Its function is as follows. Late protein which is part of a large complex required for early virion morphogenesis. This complex participates in the formation of virosomes and the incorporation of virosomal contents into nascent immature virions. The polypeptide is Core protein OPG114 (OPG114) (Vaccinia virus (strain Western Reserve) (VACV)).